Reading from the N-terminus, the 338-residue chain is Ketol-acid reductoisomerase (NADP(+)) (338 aa).

The KARI N-terminal Rossmann domain maps to 1 to 181; it reads MKVFYDKDCD…GGGRAGIIET (181 aa). NADP(+)-binding positions include 24-27, arginine 47, and serine 52; that span reads YGSQ. The active site involves histidine 107. Glycine 133 is an NADP(+) binding site. One can recognise a KARI C-terminal knotted domain in the interval 182 to 327; the sequence is NFREETETDL…AKLRAMMPWI (146 aa). The Mg(2+) site is built by aspartate 190, glutamate 194, glutamate 226, and glutamate 230. A substrate-binding site is contributed by serine 251.

The protein belongs to the ketol-acid reductoisomerase family. Mg(2+) is required as a cofactor.

The enzyme catalyses (2R)-2,3-dihydroxy-3-methylbutanoate + NADP(+) = (2S)-2-acetolactate + NADPH + H(+). It carries out the reaction (2R,3R)-2,3-dihydroxy-3-methylpentanoate + NADP(+) = (S)-2-ethyl-2-hydroxy-3-oxobutanoate + NADPH + H(+). Its pathway is amino-acid biosynthesis; L-isoleucine biosynthesis; L-isoleucine from 2-oxobutanoate: step 2/4. The protein operates within amino-acid biosynthesis; L-valine biosynthesis; L-valine from pyruvate: step 2/4. In terms of biological role, involved in the biosynthesis of branched-chain amino acids (BCAA). Catalyzes an alkyl-migration followed by a ketol-acid reduction of (S)-2-acetolactate (S2AL) to yield (R)-2,3-dihydroxy-isovalerate. In the isomerase reaction, S2AL is rearranged via a Mg-dependent methyl migration to produce 3-hydroxy-3-methyl-2-ketobutyrate (HMKB). In the reductase reaction, this 2-ketoacid undergoes a metal-dependent reduction by NADPH to yield (R)-2,3-dihydroxy-isovalerate. The chain is Ketol-acid reductoisomerase (NADP(+)) from Herminiimonas arsenicoxydans.